Here is a 479-residue protein sequence, read N- to C-terminus: Chromosomal replication initiator protein DnaA (479 aa).

Positions methionine 1–tyrosine 71 are domain I, interacts with DnaA modulators. The segment at tyrosine 71–glycine 138 is domain II. The segment covering threonine 86–arginine 99 has biased composition (polar residues). Positions threonine 86–proline 106 are disordered. Positions methionine 139–alanine 355 are domain III, AAA+ region. ATP is bound by residues glycine 183, glycine 185, lysine 186, and threonine 187. The segment at glutamate 356–glycine 479 is domain IV, binds dsDNA.

It belongs to the DnaA family. As to quaternary structure, oligomerizes as a right-handed, spiral filament on DNA at oriC.

The protein resides in the cytoplasm. In terms of biological role, plays an essential role in the initiation and regulation of chromosomal replication. ATP-DnaA binds to the origin of replication (oriC) to initiate formation of the DNA replication initiation complex once per cell cycle. Binds the DnaA box (a 9 base pair repeat at the origin) and separates the double-stranded (ds)DNA. Forms a right-handed helical filament on oriC DNA; dsDNA binds to the exterior of the filament while single-stranded (ss)DNA is stabiized in the filament's interior. The ATP-DnaA-oriC complex binds and stabilizes one strand of the AT-rich DNA unwinding element (DUE), permitting loading of DNA polymerase. After initiation quickly degrades to an ADP-DnaA complex that is not apt for DNA replication. Binds acidic phospholipids. In Chloroflexus aurantiacus (strain ATCC 29366 / DSM 635 / J-10-fl), this protein is Chromosomal replication initiator protein DnaA.